The primary structure comprises 339 residues: NADH-quinone oxidoreductase subunit H (339 aa).

The next 8 membrane-spanning stretches (helical) occupy residues 19 to 39 (LLKI…LTLA), 87 to 107 (FLLG…VVPF), 120 to 140 (LLYI…AGWA), 153 to 173 (SAAQ…GVLM), 191 to 211 (FWEW…ISAV), 253 to 273 (ILVA…PVPF), 275 to 295 (PDSI…FLWF), and 310 to 330 (LGWK…GAMM).

The protein belongs to the complex I subunit 1 family. NDH-1 is composed of 14 different subunits. Subunits NuoA, H, J, K, L, M, N constitute the membrane sector of the complex.

The protein localises to the cell inner membrane. The catalysed reaction is a quinone + NADH + 5 H(+)(in) = a quinol + NAD(+) + 4 H(+)(out). Its function is as follows. NDH-1 shuttles electrons from NADH, via FMN and iron-sulfur (Fe-S) centers, to quinones in the respiratory chain. The immediate electron acceptor for the enzyme in this species is believed to be ubiquinone. Couples the redox reaction to proton translocation (for every two electrons transferred, four hydrogen ions are translocated across the cytoplasmic membrane), and thus conserves the redox energy in a proton gradient. This subunit may bind ubiquinone. This chain is NADH-quinone oxidoreductase subunit H, found in Methylobacillus flagellatus (strain ATCC 51484 / DSM 6875 / VKM B-1610 / KT).